An 81-amino-acid chain; its full sequence is Anaphase-promoting complex subunit emb-1 (81 aa).

In terms of assembly, the APC/C is probably composed of at least 12 subunits: apc-2, apc-10, apc-11, cdc-26, emb-1, emb-27, emb-30, mat-1, mat-2, mat-3, such-1 and gfi-3. As to expression, expressed in germ cells.

It participates in protein modification; protein ubiquitination. In terms of biological role, probable component of the anaphase promoting complex/cyclosome (APC/C), a cell cycle-regulated E3 ubiquitin ligase that controls progression through mitosis and the G1 phase of the cell cycle. The APC/C complex acts by mediating ubiquitination and subsequent degradation of target proteins. Developmental role in early embryogenesis and the metaphase to anaphase transition in meiosis and mitosis. May be required for germline proliferation. Required for male tail development and hermaphrodite vulva formation. The sequence is that of Anaphase-promoting complex subunit emb-1 from Caenorhabditis elegans.